The sequence spans 570 residues: Proline--tRNA ligase (570 aa).

The protein belongs to the class-II aminoacyl-tRNA synthetase family. ProS type 1 subfamily. In terms of assembly, homodimer.

It is found in the cytoplasm. It catalyses the reaction tRNA(Pro) + L-proline + ATP = L-prolyl-tRNA(Pro) + AMP + diphosphate. In terms of biological role, catalyzes the attachment of proline to tRNA(Pro) in a two-step reaction: proline is first activated by ATP to form Pro-AMP and then transferred to the acceptor end of tRNA(Pro). As ProRS can inadvertently accommodate and process non-cognate amino acids such as alanine and cysteine, to avoid such errors it has two additional distinct editing activities against alanine. One activity is designated as 'pretransfer' editing and involves the tRNA(Pro)-independent hydrolysis of activated Ala-AMP. The other activity is designated 'posttransfer' editing and involves deacylation of mischarged Ala-tRNA(Pro). The misacylated Cys-tRNA(Pro) is not edited by ProRS. This chain is Proline--tRNA ligase, found in Shewanella sp. (strain MR-4).